The following is a 469-amino-acid chain: MKTAKEVLDFIKSNDVKYVDLRFTDPRGKWQHVTFDITMVDEDFFAEGQAFDGSSIAGWKAINESDMLLMPDVTTACVDPFFSETTLSVVCDVLEPTTGEPYGRDPRGIAKKAMAYLQSTGIGDTVFFGPEAEFFIFDDVKFKADPYNTGFKLDSIELPTNGDTDYEGGNLGHRIKTKGGYFPVPPLDSAQDMRSEMLASMAKMGAKVEKHHHEVASAQHELGLKFGQLVTMADHLQVYKYCIHQVANIYGKTATFMPKPVYGDNGSGMHVHQSIWKDGKPLFAGDKYADLSQECLWYIGGVIKHAKSLNAFTNPLTNSYKRLVPGYEAPVLLAYSARNRSASCRIPYTNNPKAKRVEVRFPDPGANPYLAFSALFMAGMDGILNKIDPGSAMDKDLYDLPPAELKQIPTVCGSLREALESLAKDHDYLLKGDVFQKDFIESYIDLKMQEVARFEMTPHPVEFEMYYSV.

A GS beta-grasp domain is found at 14–98; the sequence is NDVKYVDLRF…VVCDVLEPTT (85 aa). Positions 106 to 469 constitute a GS catalytic domain; it reads PRGIAKKAMA…PVEFEMYYSV (364 aa). E131 and E133 together coordinate Mg(2+). E209 is an ATP binding site. Residues E214 and E221 each contribute to the Mg(2+) site. Residues 265 to 266 and G266 contribute to the L-glutamate site; that span reads NG. H270 serves as a coordination point for Mg(2+). Residues 272-274 and S274 each bind ATP; that span reads HQS. 3 residues coordinate L-glutamate: R322, E328, and R340. R340, R345, and K353 together coordinate ATP. E358 contributes to the Mg(2+) binding site. R360 lines the L-glutamate pocket. Position 398 is an O-AMP-tyrosine (Y398).

It belongs to the glutamine synthetase family. Oligomer of 12 subunits arranged in the form of two hexameric ring. It depends on Mg(2+) as a cofactor.

It localises to the cytoplasm. It carries out the reaction L-glutamate + NH4(+) + ATP = L-glutamine + ADP + phosphate + H(+). Its activity is regulated as follows. The activity of this enzyme could be controlled by adenylation under conditions of abundant glutamine. Functionally, catalyzes the ATP-dependent biosynthesis of glutamine from glutamate and ammonia. The protein is Glutamine synthetase of Azorhizobium caulinodans (strain ATCC 43989 / DSM 5975 / JCM 20966 / LMG 6465 / NBRC 14845 / NCIMB 13405 / ORS 571).